The chain runs to 287 residues: Cyclopropane mycolic acid synthase MmaA2 (287 aa).

S-adenosyl-L-methionine is bound by residues 33-34 (YS), 72-74 (GCG), 94-99 (TLSKNQ), 123-124 (WE), and Ile136. Cys269 is a catalytic residue.

The protein belongs to the CFA/CMAS family.

It catalyses the reaction a 1-acyl-2-(9Z)-enoyl-sn-glycero-3-phospholipid + S-adenosyl-L-methionine = a 1-acyl-2-(9-cyclopronane)-acyl-sn-glycero-3-phospholipid + S-adenosyl-L-homocysteine + H(+). The protein operates within lipid metabolism; mycolic acid biosynthesis. In terms of biological role, catalyzes the conversion of a double bond to a cis cyclopropane ring at the distal position of an alpha mycolic acid via the transfer of a methylene group from S-adenosyl-L-methionine. MmaA2 also catalyzes the biosynthesis of the cis-cyclopropanated methoxymycolates. Cyclopropanated mycolic acids are key factors participating in cell envelope permeability, host immunomodulation and persistence. The chain is Cyclopropane mycolic acid synthase MmaA2 (mmaA2) from Mycobacterium tuberculosis (strain ATCC 25177 / H37Ra).